The sequence spans 301 residues: Syntaxin-17 (301 aa).

Position 2 is an N-acetylserine (serine 2). Over 2 to 227 (SEDEEKVKLR…KNLQKAAKYK (226 aa)) the chain is Cytoplasmic. At lysine 41 the chain carries N6-acetyllysine. Residues 49–128 (DKLHEEHINA…QVKNEEALLQ (80 aa)) adopt a coiled-coil conformation. Tyrosine 156 is subject to Phosphotyrosine; by ABL1. One can recognise a t-SNARE coiled-coil homology domain in the interval 161–223 (IPRDQNAAES…EEGTKNLQKA (63 aa)). The chain crosses the membrane as a helical span at residues 228 to 248 (LAALPVAGAVIGGVVGGPIGL). Residues 228–274 (LAALPVAGAVIGGVVGGPIGLLAGFKVAGIAAALGGGVLGFTGGKLI) are necessary and sufficient for localization to autophagosome. Residues 249-253 (LAGFK) are Lumenal-facing. The helical transmembrane segment at 254–274 (VAGIAAALGGGVLGFTGGKLI) threads the bilayer. The segment at 273-301 (LIQRRKQKMMEKLTSSCPDLPSQSDKKCS) is required for interaction with COPB1, TMED9 and TMED10. The Cytoplasmic portion of the chain corresponds to 275–301 (QRRKQKMMEKLTSSCPDLPSQSDKKCS). Serine 288 carries the post-translational modification Phosphoserine. The Endoplasmic reticulum retention signal motif lies at 298-301 (KKCS).

This sequence belongs to the syntaxin family. As to quaternary structure, forms a SNARE complex composed of VAMP8, SNAP29 and STX17 involved in fusion of autophagosome with lysosome. May interact with VAMP7. May interact with VTI1B. Probably interacts with BET1, SCFD1 and SEC22B. Interacts with PTPN2 and ABL1; involved in STX17 phosphorylation. Interacts with COPB1. Interacts with TMED9 and TMED10; the interaction is direct. Interacts with RUBCNL/PACER; promoting targeting of RUBCNL/PACER to autophagosome. Interacts with VAMP8, SNAP29, VPS39 and VPS41; these interactions are increased in the absence of TMEM39A. Interacts with IRGM; promoting STX17 recruitment to autophagosomes. Interacts with ATG8 proteins GABARAP and MAP1LC3B. Interacts with RNF115; this interaction enhances STX17 stability which in turn promotes autophagosome maturation. Interacts with RAB39A (GTP-bound); the interaction promotes autophagosome-lysosome membrane fusion driven by STX17-SNAP29-VAMP8. Interacts with RAB39B; the interaction may promote a different fonction in autophagy as compared with RAB39A. In terms of processing, phosphorylated at Tyr-156 probably by ABL1. Dephosphorylation by PTPN2; regulates exit from the endoplasmic reticulum. In terms of tissue distribution, detected in all tissues examined with higher expression in steroidogenic tissues including testis and adrenal gland (at protein level). Highly expressed in liver and testis. Also found in brain, heart, kidney, lung, placenta, skeletal muscle and spleen.

The protein resides in the endoplasmic reticulum membrane. Its subcellular location is the smooth endoplasmic reticulum membrane. It localises to the endoplasmic reticulum-Golgi intermediate compartment membrane. It is found in the cytoplasmic vesicle. The protein localises to the autophagosome membrane. The protein resides in the COPII-coated vesicle membrane. Its subcellular location is the cytoplasm. It localises to the cytosol. It is found in the mitochondrion membrane. The protein localises to the autolysosome membrane. Its function is as follows. SNAREs, soluble N-ethylmaleimide-sensitive factor-attachment protein receptors, are essential proteins for fusion of cellular membranes. SNAREs localized on opposing membranes assemble to form a trans-SNARE complex, an extended, parallel four alpha-helical bundle that drives membrane fusion. STX17 is a SNARE of the autophagosome involved in autophagy through the direct control of autophagosome membrane fusion with the lysosome membrane. May also play a role in the early secretory pathway where it may maintain the architecture of the endoplasmic reticulum-Golgi intermediate compartment/ERGIC and Golgi and/or regulate transport between the endoplasmic reticulum, the ERGIC and the Golgi. The polypeptide is Syntaxin-17 (Rattus norvegicus (Rat)).